Reading from the N-terminus, the 167-residue chain is Cofilin-2 (167 aa).

In terms of domain architecture, ADF-H spans glycine 4–leucine 153. A Nuclear localization signal motif is present at residues lysine 30–lysine 34.

The protein belongs to the actin-binding proteins ADF family.

It is found in the nucleus matrix. The protein resides in the cytoplasm. It localises to the cytoskeleton. Functionally, controls reversibly actin polymerization and depolymerization in a pH-sensitive manner. It has the ability to bind G- and F-actin in a 1:1 ratio of cofilin to actin. It is the major component of intranuclear and cytoplasmic actin rods. The sequence is that of Cofilin-2 (cfl2) from Xenopus tropicalis (Western clawed frog).